The primary structure comprises 219 residues: Lipid A acyltransferase PagP (219 aa).

Residues 1–28 form the signal peptide; that stretch reads MRLILISHSRLFALSALFLIPTFDSLSA. The disordered stretch occupies residues 39–63; that stretch reads IDRTTQSDSTTQRDSKTRRDPAPSF. Residues 49–59 are compositionally biased toward basic and acidic residues; it reads TQRDSKTRRDP. Catalysis depends on residues histidine 91, aspartate 134, and serine 135.

It belongs to the lipid A palmitoyltransferase family. Homodimer.

It localises to the cell outer membrane. The catalysed reaction is a lipid A + a 1,2-diacyl-sn-glycero-3-phosphocholine = a hepta-acyl lipid A + a 2-acyl-sn-glycero-3-phosphocholine. It catalyses the reaction a lipid IVA + a 1,2-diacyl-sn-glycero-3-phosphocholine = a lipid IVB + a 2-acyl-sn-glycero-3-phosphocholine. It carries out the reaction a lipid IIA + a 1,2-diacyl-sn-glycero-3-phosphocholine = a lipid IIB + a 2-acyl-sn-glycero-3-phosphocholine. Its function is as follows. Transfers a fatty acid residue from the sn-1 position of a phospholipid to the N-linked hydroxyfatty acid chain on the proximal unit of lipid A or its precursors. This chain is Lipid A acyltransferase PagP, found in Dickeya zeae (strain Ech586) (Dickeya dadantii (strain Ech586)).